The sequence spans 72 residues: Brevinin-2SN4 (72 aa).

Positions 1 to 22 are cleaved as a signal peptide; that stretch reads MFTMKKPMLLLFFLGMISMSLC. A propeptide spans 23-40 (removed in mature form); the sequence is QDERGADEDDGGEMTEEE. Cysteines 66 and 72 form a disulfide.

This sequence belongs to the frog skin active peptide (FSAP) family. Brevinin subfamily. Expressed by the skin glands.

Its subcellular location is the secreted. Antimicrobial peptide. Active against a variety of Gram-negative and Gram-positive bacterial strains. Not active against fungi. Shows very weak hemolytic activity against human erythrocytes. The sequence is that of Brevinin-2SN4 from Sylvirana spinulosa (Fine-spined frog).